The chain runs to 415 residues: Serine hydroxymethyltransferase (415 aa).

Residues Leu-117 and 121–123 each bind (6S)-5,6,7,8-tetrahydrofolate; that span reads GHL. Lys-226 carries the N6-(pyridoxal phosphate)lysine modification. (6S)-5,6,7,8-tetrahydrofolate contacts are provided by residues Glu-241 and 349–351; that span reads SPF.

The protein belongs to the SHMT family. In terms of assembly, homodimer. Pyridoxal 5'-phosphate is required as a cofactor.

The protein resides in the cytoplasm. The enzyme catalyses (6R)-5,10-methylene-5,6,7,8-tetrahydrofolate + glycine + H2O = (6S)-5,6,7,8-tetrahydrofolate + L-serine. The protein operates within one-carbon metabolism; tetrahydrofolate interconversion. It functions in the pathway amino-acid biosynthesis; glycine biosynthesis; glycine from L-serine: step 1/1. Functionally, catalyzes the reversible interconversion of serine and glycine with tetrahydrofolate (THF) serving as the one-carbon carrier. This reaction serves as the major source of one-carbon groups required for the biosynthesis of purines, thymidylate, methionine, and other important biomolecules. Also exhibits THF-independent aldolase activity toward beta-hydroxyamino acids, producing glycine and aldehydes, via a retro-aldol mechanism. In Geobacter sulfurreducens (strain ATCC 51573 / DSM 12127 / PCA), this protein is Serine hydroxymethyltransferase.